A 313-amino-acid polypeptide reads, in one-letter code: Fructose-1,6-bisphosphatase class 1 (313 aa).

Glu90, Asp111, Leu113, and Asp114 together coordinate Mg(2+). Residues 114-117 (DGSS), Tyr222, and Lys253 contribute to the substrate site. Residue Glu259 coordinates Mg(2+).

Belongs to the FBPase class 1 family. As to quaternary structure, homotetramer. Mg(2+) is required as a cofactor.

The protein localises to the cytoplasm. It carries out the reaction beta-D-fructose 1,6-bisphosphate + H2O = beta-D-fructose 6-phosphate + phosphate. Its pathway is carbohydrate biosynthesis; gluconeogenesis. The sequence is that of Fructose-1,6-bisphosphatase class 1 from Geotalea uraniireducens (strain Rf4) (Geobacter uraniireducens).